The chain runs to 119 residues: MPFDPSTLKYDAAGLIPAIAQDAATGEVLMMAWMNAQAVARTLESGRVTYWSRSRQSFWVKGESSGHVQELVDFRVDCDRDCLLVTVRQTGPACHTNRRSCFYTAVREGEEVELMAPLL.

Aspartate 77 is a binding site for Mg(2+). Cysteine 78 contributes to the Zn(2+) binding site. Aspartate 79 and aspartate 81 together coordinate Mg(2+). 2 residues coordinate Zn(2+): cysteine 94 and cysteine 101.

The protein belongs to the PRA-CH family. Homodimer. The cofactor is Mg(2+). Zn(2+) serves as cofactor.

It localises to the cytoplasm. It carries out the reaction 1-(5-phospho-beta-D-ribosyl)-5'-AMP + H2O = 1-(5-phospho-beta-D-ribosyl)-5-[(5-phospho-beta-D-ribosylamino)methylideneamino]imidazole-4-carboxamide. It participates in amino-acid biosynthesis; L-histidine biosynthesis; L-histidine from 5-phospho-alpha-D-ribose 1-diphosphate: step 3/9. Catalyzes the hydrolysis of the adenine ring of phosphoribosyl-AMP. This chain is Phosphoribosyl-AMP cyclohydrolase, found in Ruegeria pomeroyi (strain ATCC 700808 / DSM 15171 / DSS-3) (Silicibacter pomeroyi).